A 290-amino-acid polypeptide reads, in one-letter code: Urease accessory protein UreD (290 aa).

This sequence belongs to the UreD family. In terms of assembly, ureD, UreF and UreG form a complex that acts as a GTP-hydrolysis-dependent molecular chaperone, activating the urease apoprotein by helping to assemble the nickel containing metallocenter of UreC. The UreE protein probably delivers the nickel.

Its subcellular location is the cytoplasm. Functionally, required for maturation of urease via the functional incorporation of the urease nickel metallocenter. The sequence is that of Urease accessory protein UreD from Paenarthrobacter aurescens (strain TC1).